The chain runs to 735 residues: MASPLRFDGRVVLVTGAGGGLGRAYALAFAERGALVIVNDLGGDFKGIGKGSSAADKVVAEIRRKGGKAVANYDSVEAGEKLVKTALDTFGRIDVVVNNAGILRDRSFSRISDEDWDIIHRVHLRGSFQVTRAAWDHMKKQNYGRILMTSSASGIYGNFGQANYSAAKLGILGLCNTLAIEGRKNNIHCNTIAPNAGSRMTETVLPEDLVEALKPEYVAPLVLWLCHESCEENGGLFEVGAGWIGKLRWERTLGAIVRKRNQPMTPEAVRDNWEKICDFSNASKPQTIQESTGGIVEVLHKVDSEGISPNRTSHAAPAATSGFVGAVGHKLPSFSSSYTELQSIMYALGVGASVKNPKDLKFVYEGSADFSCLPTFGVIVAQKSMMNGGLAEVPGLSFNFAKALHGEQYLELYKPLPRSGELKCEAVIADILDKGSGVVIVMDVYSYSGKELICYNQFSVFVVGSGGFGGKRTSEKLKAAVAVPNRPPDAVLRDATSLNQAALYRLSGDWNPLHIDPDFASVAGFEKPILHGLCTFGFSARHVLQQFADNDVSRFKAIKVRFAKPVYPGQTLQTEMWKEGNRIHFQTKVHETGDVVISNAYVDLVPASGVSTQTPSEGGELQSALVFGEIGRRLKSVGREVVKKANAVFEWHITKGGTVAAKWTIDLKSGSGEVYQGPAKGSADVTIIISDEDFMEVVFGKLDPQKAFFSGRLKARGNIMLSQKLQMILKDYAKL.

Positions 1 to 305 (MASPLRFDGR…VEVLHKVDSE (305 aa)) are (3R)-hydroxyacyl-CoA dehydrogenase. NAD(+) contacts are provided by residues 13-37 (LVTG…ALVI), Leu21, and Asp40. At Lys46 the chain carries N6-acetyllysine; alternate. Lys46 is subject to N6-succinyllysine; alternate. Ser52 is subject to Phosphoserine. N6-succinyllysine occurs at positions 57 and 68. 75–76 (SV) provides a ligand contact to NAD(+). Position 84 is an N6-succinyllysine (Lys84). Asn99 provides a ligand contact to NAD(+). Residue Ser151 coordinates substrate. The active-site Proton acceptor is Tyr164. Residues 164-168 (YSAAK) and 196-199 (AGSR) contribute to the NAD(+) site. Position 265 is a phosphothreonine (Thr265). Position 275 is an N6-succinyllysine (Lys275). Ser304 and Ser308 each carry phosphoserine. Residues 321–621 (SGFVGAVGHK…TQTPSEGGEL (301 aa)) are enoyl-CoA hydratase 2. N6-succinyllysine is present on Lys355. 405–406 (HG) contacts (3R)-3-hydroxydecanoyl-CoA. Position 423 is an N6-succinyllysine (Lys423). (3R)-3-hydroxydecanoyl-CoA contacts are provided by residues Lys434, 509 to 514 (DWNPLH), Gly532, and Phe562. The region spanning 483–599 (VPNRPPDAVL…HETGDVVISN (117 aa)) is the MaoC-like domain. Lys564 carries the post-translational modification N6-acetyllysine. Residues Lys578 and Lys662 each carry the N6-succinyllysine modification. The SCP2 domain occupies 623 to 735 (SALVFGEIGR…QMILKDYAKL (113 aa)). At Lys668 the chain carries N6-acetyllysine. Substrate is bound at residue Gln705. Position 706 is an N6-acetyllysine (Lys706). Gln723 contacts substrate. An N6-succinyllysine modification is found at Lys724. Positions 733 to 735 (AKL) match the Microbody targeting signal motif.

This sequence belongs to the short-chain dehydrogenases/reductases (SDR) family. As to quaternary structure, homodimer. As to expression, present in many tissues with highest concentrations in liver and kidney.

It is found in the peroxisome. It carries out the reaction a (3R)-3-hydroxyacyl-CoA + NAD(+) = a 3-oxoacyl-CoA + NADH + H(+). It catalyses the reaction (24R,25R)-3alpha,7alpha,12alpha,24-tetrahydroxy-5beta-cholestan-26-oyl-CoA = (24E)-3alpha,7alpha,12alpha-trihydroxy-5beta-cholest-24-en-26-oyl-CoA + H2O. The enzyme catalyses a (3R)-3-hydroxyacyl-CoA = a (2E)-enoyl-CoA + H2O. The catalysed reaction is (2E)-octenoyl-CoA + H2O = (3R)-hydroxyoctanoyl-CoA. It carries out the reaction (3R)-hydroxyoctanoyl-CoA + NAD(+) = 3-oxooctanoyl-CoA + NADH + H(+). It catalyses the reaction (3R)-hydroxyhexadecanoyl-CoA + NAD(+) = 3-oxohexadecanoyl-CoA + NADH + H(+). The enzyme catalyses (2E)-hexadecenedioyl-CoA + H2O = (3R)-hydroxyhexadecanedioyl-CoA. The catalysed reaction is (3R)-hydroxyhexadecanedioyl-CoA + NAD(+) = 3-oxohexadecanedioyl-CoA + NADH + H(+). It carries out the reaction (3R)-hydroxyhexadecanoyl-CoA = (2E)-hexadecenoyl-CoA + H2O. It catalyses the reaction (3R)-3-hydroxydecanoyl-CoA = (2E)-decenoyl-CoA + H2O. The enzyme catalyses (3R)-3-hydroxydecanoyl-CoA + NAD(+) = 3-oxodecanoyl-CoA + NADH + H(+). The catalysed reaction is (24R,25R)-3alpha,7alpha,12alpha,24-tetrahydroxy-5beta-cholestan-26-oyl-CoA + NAD(+) = 3alpha,7alpha,12alpha-trihydroxy-24-oxo-5beta-cholestan-26-oyl-CoA + NADH + H(+). The protein operates within lipid metabolism; fatty acid beta-oxidation. Bifunctional enzyme acting on the peroxisomal fatty acid beta-oxidation pathway. Catalyzes two of the four reactions in fatty acid degradation: hydration of 2-enoyl-CoA (trans-2-enoyl-CoA) to produce (3R)-3-hydroxyacyl-CoA, and dehydrogenation of (3R)-3-hydroxyacyl-CoA to produce 3-ketoacyl-CoA (3-oxoacyl-CoA), which is further metabolized by SCPx. Can use straight-chain and branched-chain fatty acids, as well as bile acid intermediates as substrates. In Mus musculus (Mouse), this protein is Peroxisomal multifunctional enzyme type 2.